Here is a 127-residue protein sequence, read N- to C-terminus: Small ribosomal subunit protein eS8 (127 aa).

The interval 1 to 33 (MAIWQGKSMKKPSGGRAKMNRGKRKYELGREPA) is disordered.

Belongs to the eukaryotic ribosomal protein eS8 family. As to quaternary structure, part of the 30S ribosomal subunit.

In Methanothermobacter thermautotrophicus (strain ATCC 29096 / DSM 1053 / JCM 10044 / NBRC 100330 / Delta H) (Methanobacterium thermoautotrophicum), this protein is Small ribosomal subunit protein eS8 (rps8e).